Reading from the N-terminus, the 89-residue chain is Ragulator complex protein LAMTOR5 homolog (89 aa).

This sequence belongs to the LAMTOR5 family. As to quaternary structure, part of the Ragulator complex.

It is found in the cytoplasm. The protein localises to the lysosome. Regulator of the TOR pathway, a signaling cascade that promotes cell growth in response to growth factors, energy levels, and amino acids. As part of the Ragulator complex, may activate the TOR signaling cascade in response to amino acids. The protein is Ragulator complex protein LAMTOR5 homolog of Dictyostelium discoideum (Social amoeba).